The primary structure comprises 273 residues: 4-hydroxy-tetrahydrodipicolinate reductase (273 aa).

NAD(+) contacts are provided by residues 12 to 17 (GAGGRM) and glutamate 38. Arginine 39 is a binding site for NADP(+). NAD(+) contacts are provided by residues 102 to 104 (GTT) and 126 to 129 (AANF). Histidine 159 functions as the Proton donor/acceptor in the catalytic mechanism. Histidine 160 contributes to the (S)-2,3,4,5-tetrahydrodipicolinate binding site. The active-site Proton donor is the lysine 163. Residue 169–170 (GT) participates in (S)-2,3,4,5-tetrahydrodipicolinate binding.

This sequence belongs to the DapB family. As to quaternary structure, homotetramer.

The protein localises to the cytoplasm. The enzyme catalyses (S)-2,3,4,5-tetrahydrodipicolinate + NAD(+) + H2O = (2S,4S)-4-hydroxy-2,3,4,5-tetrahydrodipicolinate + NADH + H(+). It carries out the reaction (S)-2,3,4,5-tetrahydrodipicolinate + NADP(+) + H2O = (2S,4S)-4-hydroxy-2,3,4,5-tetrahydrodipicolinate + NADPH + H(+). It functions in the pathway amino-acid biosynthesis; L-lysine biosynthesis via DAP pathway; (S)-tetrahydrodipicolinate from L-aspartate: step 4/4. Functionally, catalyzes the conversion of 4-hydroxy-tetrahydrodipicolinate (HTPA) to tetrahydrodipicolinate. The sequence is that of 4-hydroxy-tetrahydrodipicolinate reductase from Salmonella enteritidis PT4 (strain P125109).